We begin with the raw amino-acid sequence, 258 residues long: Thiazole synthase (258 aa).

The active-site Schiff-base intermediate with DXP is lysine 98. 1-deoxy-D-xylulose 5-phosphate-binding positions include glycine 159, alanine 185–glycine 186, and asparagine 207–threonine 208.

Belongs to the ThiG family. Homotetramer. Forms heterodimers with either ThiH or ThiS.

The protein resides in the cytoplasm. It carries out the reaction [ThiS sulfur-carrier protein]-C-terminal-Gly-aminoethanethioate + 2-iminoacetate + 1-deoxy-D-xylulose 5-phosphate = [ThiS sulfur-carrier protein]-C-terminal Gly-Gly + 2-[(2R,5Z)-2-carboxy-4-methylthiazol-5(2H)-ylidene]ethyl phosphate + 2 H2O + H(+). The protein operates within cofactor biosynthesis; thiamine diphosphate biosynthesis. Functionally, catalyzes the rearrangement of 1-deoxy-D-xylulose 5-phosphate (DXP) to produce the thiazole phosphate moiety of thiamine. Sulfur is provided by the thiocarboxylate moiety of the carrier protein ThiS. In vitro, sulfur can be provided by H(2)S. In Bacillus cereus (strain ZK / E33L), this protein is Thiazole synthase.